Consider the following 390-residue polypeptide: Neutrophil cytosol factor 1 (390 aa).

Residues 4–125 (TFIRHIALLG…DFFKVRPDDL (122 aa)) form the PX domain. SH3 domains follow at residues 156-215 (IILQ…PLDS) and 226-285 (YAGE…KAGE). The segment at 291–390 (QRQIRGRGAP…STKRKLTSAV (100 aa)) is disordered. Residues Ser304, Ser321, Ser329, and Ser346 each carry the phosphoserine modification. Positions 374 to 383 (ILHRCTESTK) are enriched in basic and acidic residues.

As to quaternary structure, component of the phagocyte NADPH oxidase complex composed of an obligatory core heterodimer formed by the membrane proteins CYBA and CYBB and the cytosolic regulatory subunits NCF1/p47-phox, NCF2/p67-phox, NCF4/p40-phox and the small GTPase RAC1 or RAC2. Part of a cytosolic complex composed at least by NCF1, NCF2 and NCF4. Interacts (via C-terminus) with NCF2 (via the C-terminal SH3 domain). Interacts with NCF4. Interacts with CYBB. Interacts (via the second SH3 domain) with CYBA; interaction is phosphorylation-dependent. Interacts with NOXA1. Interacts with ADAM15. Interacts with TRAF4. Interacts with FASLG. Interacts with PARK7 (via C-terminus); the interaction is enhanced by LPS and modulates NCF1 phosphorylation and membrane translocation. Post-translationally, phosphorylated by PRKCD; phosphorylation induces activation of NCF1, leading to assembly and activation of the NADPH oxidase complex.

Its subcellular location is the cytoplasm. The protein localises to the cytosol. It is found in the membrane. In terms of biological role, subunit of the phagocyte NADPH oxidase complex that mediates the transfer of electrons from cytosolic NADPH to O2 to produce the superoxide anion (O2(-)). In the activated complex, electrons are first transferred from NADPH to flavin adenine dinucleotide (FAD) and subsequently transferred via two heme molecules to molecular oxygen, producing superoxide through an outer-sphere reaction. Activation of the NADPH oxidase complex is initiated by the assembly of cytosolic subunits of the NADPH oxidase complex with the core NADPH oxidase complex to form a complex at the plasma membrane or phagosomal membrane. This activation process is initiated by phosphorylation dependent binding of the cytosolic NCF1/p47-phox subunit to the C-terminus of CYBA/p22-phox. In Mus musculus (Mouse), this protein is Neutrophil cytosol factor 1.